The chain runs to 162 residues: Cyclic pyranopterin monophosphate synthase (162 aa).

Residues 75–77 and 113–114 contribute to the substrate site; these read LCH and ME. Residue D128 is part of the active site.

This sequence belongs to the MoaC family. In terms of assembly, homohexamer; trimer of dimers.

The catalysed reaction is (8S)-3',8-cyclo-7,8-dihydroguanosine 5'-triphosphate = cyclic pyranopterin phosphate + diphosphate. Its pathway is cofactor biosynthesis; molybdopterin biosynthesis. Its function is as follows. Catalyzes the conversion of (8S)-3',8-cyclo-7,8-dihydroguanosine 5'-triphosphate to cyclic pyranopterin monophosphate (cPMP). In Burkholderia cenocepacia (strain ATCC BAA-245 / DSM 16553 / LMG 16656 / NCTC 13227 / J2315 / CF5610) (Burkholderia cepacia (strain J2315)), this protein is Cyclic pyranopterin monophosphate synthase.